We begin with the raw amino-acid sequence, 147 residues long: MVRLTDSEKAEVVSLWSKVDEKIIGSEALGRLLVIYPWTQRFFEHFGDLSTADAIMKNPRVQAHGEKVLSSFGEGLNHLDNLRGTFAQLSELHCDELHVDPENFRLLGNILVVVLARHYGKEFTLEVQAACQKFVAGMANALAHKYH.

Positions arginine 3–histidine 147 constitute a Globin domain. Heme b contacts are provided by histidine 64 and histidine 93.

Belongs to the globin family. Heterotetramer of two delta chains and two alpha chains. Red blood cells.

The polypeptide is Hemoglobin subunit deltaH (Heterohyrax brucei (Yellow-spotted hyrax)).